The chain runs to 298 residues: Probable 2-(5''-triphosphoribosyl)-3'-dephosphocoenzyme-A synthase (298 aa).

Belongs to the CitG/MdcB family.

It catalyses the reaction 3'-dephospho-CoA + ATP = 2'-(5''-triphospho-alpha-D-ribosyl)-3'-dephospho-CoA + adenine. In Salmonella arizonae (strain ATCC BAA-731 / CDC346-86 / RSK2980), this protein is Probable 2-(5''-triphosphoribosyl)-3'-dephosphocoenzyme-A synthase.